Reading from the N-terminus, the 629-residue chain is Pumilio homolog 3 (629 aa).

Composition is skewed to basic residues over residues 1–10 (MEGKPRKKSF) and 18–37 (PSFK…RPFK). The disordered stretch occupies residues 1-92 (MEGKPRKKSF…EGDERKKPKW (92 aa)). The segment covering 62–92 (KPTDGKFAKKRKFPGDRIKQEEGDERKKPKW) has biased composition (basic and acidic residues). The short motif at 88-100 (KKPKWDEFKQKKK) is the Nuclear localization signal element. The PUM-HD domain maps to 120-473 (RAKQVWEMVR…ELLEAASPSL (354 aa)). Pumilio repeat units follow at residues 160 to 195 (HDST…LSKS), 196 to 231 (KYAR…MLRH), 232 to 260 (SEAS…ELYG), 272 to 308 (PTLE…VIKH), 309 to 344 (SLVH…MAHT), 345 to 380 (HDGA…FAMG), 381 to 418 (EYAH…IISN), 419 to 487 (KHGK…MVMD), 488 to 534 (KSCC…MAEH), 535 to 579 (PAGH…WASV), and 580 to 618 (NRGA…LQNS).

In terms of tissue distribution, in adult, expressed at high levels in eye and ovary and at lower levels in brain, testis and head kidney. In the adult ovary, prominently expressed in early immature follicles.

The protein resides in the nucleus. Its subcellular location is the nucleolus. It is found in the nucleoplasm. The protein localises to the chromosome. Functionally, inhibits the poly(ADP-ribosyl)ation activity of PARP1 and the degradation of PARP1 by CASP3 following genotoxic stress. Binds to double-stranded RNA or DNA without sequence specificity. Involved in development of the eye and of primordial germ cells. The chain is Pumilio homolog 3 (pum3) from Danio rerio (Zebrafish).